Consider the following 74-residue polypeptide: WAP four-disulfide core domain protein 18 (74 aa).

The signal sequence occupies residues 1-24 (MKTATVFVLVALIFMTMTTAWALS). In terms of domain architecture, WAP spans 26–73 (PKEKPGACPKPPPRSFGTCDERCTGDGSCSGNMKCCSNGCGHACKPPV).

It is found in the secreted. Could have proteinase inhibiting capacity. The chain is WAP four-disulfide core domain protein 18 (WFDC18) from Bos taurus (Bovine).